Here is a 316-residue protein sequence, read N- to C-terminus: Methionyl-tRNA formyltransferase (316 aa).

Ser-112–Pro-115 contacts (6S)-5,6,7,8-tetrahydrofolate.

Belongs to the Fmt family.

It carries out the reaction L-methionyl-tRNA(fMet) + (6R)-10-formyltetrahydrofolate = N-formyl-L-methionyl-tRNA(fMet) + (6S)-5,6,7,8-tetrahydrofolate + H(+). Functionally, attaches a formyl group to the free amino group of methionyl-tRNA(fMet). The formyl group appears to play a dual role in the initiator identity of N-formylmethionyl-tRNA by promoting its recognition by IF2 and preventing the misappropriation of this tRNA by the elongation apparatus. The protein is Methionyl-tRNA formyltransferase of Psychromonas ingrahamii (strain DSM 17664 / CCUG 51855 / 37).